A 196-amino-acid chain; its full sequence is dTTP/UTP pyrophosphatase (196 aa).

The active-site Proton acceptor is Asp-73.

This sequence belongs to the Maf family. YhdE subfamily. A divalent metal cation is required as a cofactor.

The protein resides in the cytoplasm. The catalysed reaction is dTTP + H2O = dTMP + diphosphate + H(+). The enzyme catalyses UTP + H2O = UMP + diphosphate + H(+). Functionally, nucleoside triphosphate pyrophosphatase that hydrolyzes dTTP and UTP. May have a dual role in cell division arrest and in preventing the incorporation of modified nucleotides into cellular nucleic acids. The protein is dTTP/UTP pyrophosphatase of Myxococcus xanthus (strain DK1622).